The sequence spans 552 residues: Probable beta-glucosidase btgE (552 aa).

The signal sequence occupies residues 1–18 (MRGAILATAAALAGTAMA). Residues 250 to 291 (EPTSAPAAPSTTAVPATTTAAVPSTSSAAPSSSSTAPASTGA) form a disordered region. Residues 251–289 (PTSAPAAPSTTAVPATTTAAVPSTSSAAPSSSSTAPAST) are compositionally biased toward low complexity. E392 serves as the catalytic Proton donor. The active-site Nucleophile is the E488.

This sequence belongs to the glycosyl hydrolase 17 family.

It is found in the secreted. The protein resides in the cell wall. It catalyses the reaction Hydrolysis of terminal, non-reducing beta-D-glucosyl residues with release of beta-D-glucose.. It participates in glycan metabolism; cellulose degradation. Its function is as follows. Beta-glucosidases are one of a number of cellulolytic enzymes involved in the degradation of cellulosic biomass. Catalyzes the last step releasing glucose from the inhibitory cellobiose. The polypeptide is Probable beta-glucosidase btgE (btgE) (Neosartorya fischeri (strain ATCC 1020 / DSM 3700 / CBS 544.65 / FGSC A1164 / JCM 1740 / NRRL 181 / WB 181) (Aspergillus fischerianus)).